The primary structure comprises 578 residues: Proline--tRNA ligase (578 aa).

It belongs to the class-II aminoacyl-tRNA synthetase family. ProS type 1 subfamily. In terms of assembly, homodimer.

It is found in the cytoplasm. It carries out the reaction tRNA(Pro) + L-proline + ATP = L-prolyl-tRNA(Pro) + AMP + diphosphate. In terms of biological role, catalyzes the attachment of proline to tRNA(Pro) in a two-step reaction: proline is first activated by ATP to form Pro-AMP and then transferred to the acceptor end of tRNA(Pro). As ProRS can inadvertently accommodate and process non-cognate amino acids such as alanine and cysteine, to avoid such errors it has two additional distinct editing activities against alanine. One activity is designated as 'pretransfer' editing and involves the tRNA(Pro)-independent hydrolysis of activated Ala-AMP. The other activity is designated 'posttransfer' editing and involves deacylation of mischarged Ala-tRNA(Pro). The misacylated Cys-tRNA(Pro) is not edited by ProRS. The chain is Proline--tRNA ligase from Burkholderia lata (strain ATCC 17760 / DSM 23089 / LMG 22485 / NCIMB 9086 / R18194 / 383).